Here is a 760-residue protein sequence, read N- to C-terminus: Xaa-Pro dipeptidyl-peptidase (760 aa).

Active-site charge relay system residues include serine 349, aspartate 469, and histidine 499.

Belongs to the peptidase S15 family. As to quaternary structure, homodimer.

The protein resides in the cytoplasm. It carries out the reaction Hydrolyzes Xaa-Pro-|- bonds to release unblocked, N-terminal dipeptides from substrates including Ala-Pro-|-p-nitroanilide and (sequentially) Tyr-Pro-|-Phe-Pro-|-Gly-Pro-|-Ile.. Its function is as follows. Removes N-terminal dipeptides sequentially from polypeptides having unsubstituted N-termini provided that the penultimate residue is proline. The polypeptide is Xaa-Pro dipeptidyl-peptidase (Streptococcus pyogenes serotype M2 (strain MGAS10270)).